A 410-amino-acid chain; its full sequence is Peptidase T (410 aa).

A Zn(2+)-binding site is contributed by His78. Asp80 is a catalytic residue. Residue Asp140 coordinates Zn(2+). Residue Glu173 is the Proton acceptor of the active site. 3 residues coordinate Zn(2+): Glu174, Asp196, and His379.

It belongs to the peptidase M20B family. Zn(2+) is required as a cofactor.

It is found in the cytoplasm. The enzyme catalyses Release of the N-terminal residue from a tripeptide.. In terms of biological role, cleaves the N-terminal amino acid of tripeptides. The chain is Peptidase T from Pectobacterium atrosepticum (strain SCRI 1043 / ATCC BAA-672) (Erwinia carotovora subsp. atroseptica).